A 484-amino-acid polypeptide reads, in one-letter code: Adenylosuccinate synthetase, chloroplastic (484 aa).

The N-terminal 44 residues, 1 to 44 (MSLSTLSHPAAAAAGSGKSLFPAGPAAQSVHFPKARLPVPAAVS), are a transit peptide targeting the chloroplast. Residues 71–77 (GDEGKGK) and 99–101 (GHT) contribute to the GTP site. Residue Asp72 is the Proton acceptor of the active site. Mg(2+) is bound by residues Asp72 and Gly99. IMP is bound by residues 72-75 (DEGK), 97-100 (NAGH), Thr189, Arg203, Gln283, Thr298, and Arg362. Catalysis depends on His100, which acts as the Proton donor. A substrate-binding site is contributed by 358–364 (TTTGRPR). GTP contacts are provided by residues Arg364, 390–392 (KLD), and 473–475 (GVG).

This sequence belongs to the adenylosuccinate synthetase family. Homodimer. Mg(2+) serves as cofactor.

It is found in the plastid. Its subcellular location is the chloroplast. The catalysed reaction is IMP + L-aspartate + GTP = N(6)-(1,2-dicarboxyethyl)-AMP + GDP + phosphate + 2 H(+). The protein operates within purine metabolism; AMP biosynthesis via de novo pathway; AMP from IMP: step 1/2. Its function is as follows. Plays an important role in the de novo pathway and in the salvage pathway of purine nucleotide biosynthesis. Catalyzes the first committed step in the biosynthesis of AMP from IMP. This Zea mays (Maize) protein is Adenylosuccinate synthetase, chloroplastic.